A 260-amino-acid polypeptide reads, in one-letter code: Ribonuclease 3 (260 aa).

The interval 1–24 is disordered; sequence MAQSSKYQRKPRSGERKRSQRRLE. Residues 12 to 24 show a composition bias toward basic and acidic residues; it reads RSGERKRSQRRLE. The RNase III domain occupies 33 to 162; that stretch reads FDDLLVRTGL…FIGALYMDQG (130 aa). E75 lines the Mg(2+) pocket. The active site involves D79. The Mg(2+) site is built by D148 and E151. E151 is a catalytic residue. Residues 188-257 enclose the DRBM domain; the sequence is DFKSQLQEFV…AKQALLALNQ (70 aa).

This sequence belongs to the ribonuclease III family. Homodimer. Mg(2+) serves as cofactor.

Its subcellular location is the cytoplasm. The catalysed reaction is Endonucleolytic cleavage to 5'-phosphomonoester.. In terms of biological role, digests double-stranded RNA. Involved in the processing of primary rRNA transcript to yield the immediate precursors to the large and small rRNAs (23S and 16S). Processes some mRNAs, and tRNAs when they are encoded in the rRNA operon. Processes pre-crRNA and tracrRNA of type II CRISPR loci if present in the organism. This Shouchella clausii (strain KSM-K16) (Alkalihalobacillus clausii) protein is Ribonuclease 3.